A 73-amino-acid chain; its full sequence is Mu-sparatoxin-Hv2 (73 aa).

The N-terminal stretch at 1–20 (MKFAIVITLLLVAFSAVALA) is a signal peptide. A propeptide spanning residues 21–35 (DKSIERAVMDLITAR) is cleaved from the precursor. Intrachain disulfides connect Cys39–Cys53, Cys46–Cys58, and Cys52–Cys68. The residue at position 72 (Phe72) is a Phenylalanine amide.

Belongs to the neurotoxin 10 (Hwtx-1) family. Expressed by the venom gland.

The protein resides in the secreted. Insecticidal toxin that potently and irreversibly blocks voltage-gated sodium channels (Nav) in cockroach dorsal unpaired median (DUM) neurons (IC(50)=833.7 nM). It does not change both the steady-state activation and inactivation curves, suggesting it acts as a pore blocker (possibly at Nav site 1). Does not show toxicity when intraperitoneally injected into mouse. The chain is Mu-sparatoxin-Hv2 from Heteropoda venatoria (Brown huntsman spider).